The sequence spans 142 residues: MPMGINAARKMEDDWKKLRWSDPHYCRRALGLKVKADPLGGAPRARGIVLEKVGVEAKQPNSAIRKCVRIQLIKNGRQVTAFCPGDGAIGFIDEHDEVVVERIGGRMGRSMGDIPGVRFKVVAVNNVSLEEMVSGRKEKPVR.

It belongs to the universal ribosomal protein uS12 family. Part of the 30S ribosomal subunit.

Functionally, with S4 and S5 plays an important role in translational accuracy. Located at the interface of the 30S and 50S subunits. This is Small ribosomal subunit protein uS12 from Methanothrix thermoacetophila (strain DSM 6194 / JCM 14653 / NBRC 101360 / PT) (Methanosaeta thermophila).